A 695-amino-acid polypeptide reads, in one-letter code: MAQLDTLDLVVLAVLLVGSVAYFTKGTYWAVAKDPYASTGPAMNGAAKAGKTRNIIEKMEETGKNCVIFYGSQTGTAEDYASRLAKEGSQRFGLKTMVADLEEYDYENLDQFPEDKVAFFVLATYGEGEPTDNAVEFYQFFTGDDVAFESGASADEKPLSKLKYVAFGLGNNTYEHYNAMVRQVDAAFQKLGAQRIGSAGEGDDGAGTMEEDFLAWKEPMWAALSESMDLQEREAVYEPVFCVTENESLSPEDETVYLGEPTQSHLQGTPKGPYSAHNPFIAPIAESRELFTVKDRNCLHMEISIAGSNLSYQTGDHIAVWPTNAGAEVDRFLQVFGLEGKRDSVINIKGIDVTAKVPIPTPTTYDAAVRYYMEVCAPVSRQFVATLAAFAPDEESKAEIVRLGSDKDYFHEKVTNQCFNIAQALQSITSKPFSAVPFSLLIEGITKLQPRYYSISSSSLVQKDKISITAVVESVRLPGASHMVKGVTTNYLLALKQKQNGDPSPDPHGLTYSITGPRNKYDGIHVPVHVRHSNFKLPSDPSRPIIMVGPGTGVAPFRGFIQERAALAAKGEKVGPTVLFFGCRKSDEDFLYKDEWKTYQDQLGDNLKIITAFSREGPQKVYVQHRLREHSELVSDLLKQKATFYVCGDAANMAREVNLVLGQIIAAQRGLPAEKGEEMVKHMRSSGSYQEDVWS.

The Lumenal portion of the chain corresponds to 1 to 8 (MAQLDTLD). Residues 9-31 (LVVLAVLLVGSVAYFTKGTYWAV) form a helical membrane-spanning segment. Topologically, residues 32–695 (AKDPYASTGP…SGSYQEDVWS (664 aa)) are cytoplasmic. A Flavodoxin-like domain is found at 66–221 (CVIFYGSQTG…DFLAWKEPMW (156 aa)). FMN-binding positions include 72–77 (SQTGTA), 123–126 (ATYG), 169–178 (LGNNTYEHYN), and aspartate 204. Positions 277–538 (HNPFIAPIAE…HVRHSNFKLP (262 aa)) constitute an FAD-binding FR-type domain. Arginine 296 is a binding site for NADP(+). FAD is bound by residues 451-454 (RYYS), 469-471 (TAV), and 486-489 (GVTT). Residues threonine 552, 614–615 (SR), 620–624 (KVYVQ), and glutamate 656 contribute to the NADP(+) site. Tryptophan 694 provides a ligand contact to FAD.

It belongs to the NADPH--cytochrome P450 reductase family. The protein in the N-terminal section; belongs to the flavodoxin family. This sequence in the C-terminal section; belongs to the flavoprotein pyridine nucleotide cytochrome reductase family. FAD serves as cofactor. Requires FMN as cofactor.

Its subcellular location is the endoplasmic reticulum membrane. It localises to the mitochondrion outer membrane. The protein localises to the cell membrane. It catalyses the reaction 2 oxidized [cytochrome P450] + NADPH = 2 reduced [cytochrome P450] + NADP(+) + H(+). In terms of biological role, this enzyme is required for electron transfer from NADP to cytochrome P450 in microsomes. It can also provide electron transfer to heme oxygenase and cytochrome B5. Involved in ergosterol biosynthesis. In Aspergillus niger (strain ATCC MYA-4892 / CBS 513.88 / FGSC A1513), this protein is NADPH--cytochrome P450 reductase.